We begin with the raw amino-acid sequence, 382 residues long: V-type proton ATPase subunit C 1 (382 aa).

Thr2 is modified (N-acetylthreonine).

It belongs to the V-ATPase C subunit family. V-ATPase is a heteromultimeric enzyme made up of two complexes: the ATP-hydrolytic V1 complex and the proton translocation V0 complex. The V1 complex consists of three catalytic AB heterodimers that form a heterohexamer, three peripheral stalks each consisting of EG heterodimers, one central rotor including subunits D and F, and the regulatory subunits C and H. The proton translocation complex V0 consists of the proton transport subunit a, a ring of proteolipid subunits c9c'', rotary subunit d, subunits e and f, and two accessory subunits.

Subunit of the V1 complex of vacuolar(H+)-ATPase (V-ATPase), a multisubunit enzyme composed of a peripheral complex (V1) that hydrolyzes ATP and a membrane integral complex (V0) that translocates protons. V-ATPase is responsible for acidifying and maintaining the pH of intracellular compartments and in some cell types, is targeted to the plasma membrane, where it is responsible for acidifying the extracellular environment. Subunit C is necessary for the assembly of the catalytic sector of the enzyme and is likely to have a specific function in its catalytic activity. This Xenopus tropicalis (Western clawed frog) protein is V-type proton ATPase subunit C 1 (atp6v1c1).